The following is a 256-amino-acid chain: Calsenilin (256 aa).

The segment at 1–22 (MQRTKEAMKASDGSLLGDPGRI) is disordered. Residue S14 is modified to Phosphoserine. Residue K26 forms a Glycyl lysine isopeptide (Lys-Gly) (interchain with G-Cter in SUMO1) linkage. Residues C45 and C46 are each lipidated (S-palmitoyl cysteine). Phosphoserine is present on residues S60 and S63. Residues 67–123 (LELSTVRHQPEGLDQLQAQTKFTKKELQSLYRGFKNECPTGLVDEDTFKLIYSQFFP) enclose the EF-hand 1; degenerate domain. Residue K90 forms a Glycyl lysine isopeptide (Lys-Gly) (interchain with G-Cter in SUMO1) linkage. 3 consecutive EF-hand domains span residues 126 to 161 (DATTYAHFLFNAFDADGNGAIHFEDFVVGLSILLRG), 162 to 197 (TVHEKLKWAFNLYDINKDGYITKEEMLAIMKSIYDM), and 210 to 245 (APLEHVERFFQKMDRNQDGVVTIDEFLETCQKDENI). 9 residues coordinate Ca(2+): D175, N177, D179, Y181, E186, D223, N225, D227, and E234. An interaction with KCND2 region spans residues 243–256 (ENIMSSMQLFENVI).

Belongs to the recoverin family. Binds to DNA as a homomultimer. Dimerization is induced by binding to calcium. Interacts with the C-terminus of PSEN1 and PSEN2 and with PSEN2 CTF subunit. Associates with KCN1. Component of heteromultimeric potassium channels. Identified in potassium channel complexes containing KCND1, KCND2, KCND3, KCNIP1, KCNIP2, KCNIP3, KCNIP4, DPP6 and DPP10. Interacts with KCND2 and KCND3. Post-translationally, palmitoylated. Palmitoylation enhances association with the plasma membrane. In terms of processing, proteolytically cleaved by caspase-3. In terms of tissue distribution, detected in brain cortex, thalamus, dentate gyrus and cerebellum (at protein level). Expressed in brain. Colocalizes with KCND2 in excitatory neurons including cortical and hippocampal CA1 pyramidal cells.

It localises to the cytoplasm. The protein resides in the cell membrane. The protein localises to the endoplasmic reticulum. Its subcellular location is the golgi apparatus. It is found in the nucleus. In terms of biological role, calcium-dependent transcriptional repressor that binds to the DRE element of genes including PDYN and FOS. Affinity for DNA is reduced upon binding to calcium and enhanced by binding to magnesium. Seems to be involved in nociception. Its function is as follows. Regulatory subunit of Kv4/D (Shal)-type voltage-gated rapidly inactivating A-type potassium channels, such as KCND2/Kv4.2 and KCND3/Kv4.3. Modulates channel expression at the cell membrane, gating characteristics, inactivation kinetics and rate of recovery from inactivation in a calcium-dependent and isoform-specific manner. May play a role in the regulation of PSEN2 proteolytic processing and apoptosis. Together with PSEN2 involved in modulation of amyloid-beta formation. The polypeptide is Calsenilin (Kcnip3) (Rattus norvegicus (Rat)).